A 138-amino-acid polypeptide reads, in one-letter code: Small ribosomal subunit protein uS11c (138 aa).

A disordered region spans residues 1 to 23; that stretch reads MAKAIPRVGSRKNGRISSRKSAR. Residues 9–23 are compositionally biased toward basic residues; that stretch reads GSRKNGRISSRKSAR.

Belongs to the universal ribosomal protein uS11 family. As to quaternary structure, part of the 30S ribosomal subunit.

It localises to the plastid. It is found in the chloroplast. This is Small ribosomal subunit protein uS11c from Coffea arabica (Arabian coffee).